The primary structure comprises 152 residues: 3-hydroxyacyl-[acyl-carrier-protein] dehydratase FabZ (152 aa).

The active site involves His-57.

It belongs to the thioester dehydratase family. FabZ subfamily.

The protein localises to the cytoplasm. The enzyme catalyses a (3R)-hydroxyacyl-[ACP] = a (2E)-enoyl-[ACP] + H2O. Involved in unsaturated fatty acids biosynthesis. Catalyzes the dehydration of short chain beta-hydroxyacyl-ACPs and long chain saturated and unsaturated beta-hydroxyacyl-ACPs. The protein is 3-hydroxyacyl-[acyl-carrier-protein] dehydratase FabZ of Bradyrhizobium sp. (strain BTAi1 / ATCC BAA-1182).